Consider the following 192-residue polypeptide: Ribosomal RNA small subunit methyltransferase G (192 aa).

S-adenosyl-L-methionine-binding positions include glycine 63, leucine 68, 112–113, and arginine 125; that span reads IE.

The protein belongs to the methyltransferase superfamily. RNA methyltransferase RsmG family.

Its subcellular location is the cytoplasm. The catalysed reaction is guanosine(527) in 16S rRNA + S-adenosyl-L-methionine = N(7)-methylguanosine(527) in 16S rRNA + S-adenosyl-L-homocysteine. Specifically methylates the N7 position of guanine in position 527 of 16S rRNA. This chain is Ribosomal RNA small subunit methyltransferase G, found in Rickettsia africae (strain ESF-5).